The sequence spans 86 residues: MEPVDPRLEPWKHPGSQPKTACTNCYCKKCCFHCQVCFITKALGISYGRKKRRQRRRAHQNSQTHQASLSKQPTSQPRGDPTGPKE.

Residues 1 to 24 (MEPVDPRLEPWKHPGSQPKTACTN) form an interaction with human CREBBP region. Positions 1 to 48 (MEPVDPRLEPWKHPGSQPKTACTNCYCKKCCFHCQVCFITKALGISYG) are transactivation. Zn(2+)-binding residues include cysteine 22, cysteine 25, and cysteine 27. A cysteine-rich region spans residues 22-37 (CTNCYCKKCCFHCQVC). Lysine 28 carries the post-translational modification N6-acetyllysine; by host PCAF. Residues cysteine 30, histidine 33, cysteine 34, and cysteine 37 each contribute to the Zn(2+) site. The segment at 38–48 (FITKALGISYG) is core. Basic residues predominate over residues 48–59 (GRKKRRQRRRAH). A disordered region spans residues 48–86 (GRKKRRQRRRAHQNSQTHQASLSKQPTSQPRGDPTGPKE). A Nuclear localization signal, RNA-binding (TAR), and protein transduction motif is present at residues 49–57 (RKKRRQRRR). The interaction with the host capping enzyme RNGTT stretch occupies residues 49 to 86 (RKKRRQRRRAHQNSQTHQASLSKQPTSQPRGDPTGPKE). Lysine 50 and lysine 51 each carry N6-acetyllysine; by host EP300 and GCN5L2. An asymmetric dimethylarginine; by host PRMT6 mark is found at arginine 52 and arginine 53. Positions 60 to 77 (QNSQTHQASLSKQPTSQP) are enriched in polar residues. Residue lysine 71 forms a Glycyl lysine isopeptide (Lys-Gly) (interchain with G-Cter in ubiquitin) linkage. The Cell attachment site signature appears at 78–80 (RGD).

It belongs to the lentiviruses Tat family. As to quaternary structure, interacts with host CCNT1. Associates with the P-TEFb complex composed at least of Tat, P-TEFb (CDK9 and CCNT1), TAR RNA, RNA Pol II. Recruits the HATs CREBBP, TAF1/TFIID, EP300, PCAF and GCN5L2. Interacts with host KAT5/Tip60; this interaction targets the latter to degradation. Interacts with the host deacetylase SIRT1. Interacts with host capping enzyme RNGTT; this interaction stimulates RNGTT. Binds to host KDR, and to the host integrins ITGAV/ITGB3 and ITGA5/ITGB1. Interacts with host KPNB1/importin beta-1 without previous binding to KPNA1/importin alpha-1. Interacts with EIF2AK2. Interacts with host nucleosome assembly protein NAP1L1; this interaction may be required for the transport of Tat within the nucleus, since the two proteins interact at the nuclear rim. Interacts with host C1QBP/SF2P32; this interaction involves lysine-acetylated Tat. Interacts with the host chemokine receptors CCR2, CCR3 and CXCR4. Interacts with host DPP4/CD26; this interaction may trigger an anti-proliferative effect. Interacts with host LDLR. Interacts with the host extracellular matrix metalloproteinase MMP1. Interacts with host PRMT6; this interaction mediates Tat's methylation. Interacts with, and is ubiquitinated by MDM2/Hdm2. Interacts with host PSMC3 and HTATIP2. Interacts with STAB1; this interaction may overcome SATB1-mediated repression of IL2 and IL2RA (interleukin) in T cells by binding to the same domain than HDAC1. Interacts (when acetylated) with human CDK13, thereby increasing HIV-1 mRNA splicing and promoting the production of the doubly spliced HIV-1 protein Nef. Interacts with host TBP; this interaction modulates the activity of transcriptional pre-initiation complex. Interacts with host RELA. Interacts with host PLSCR1; this interaction negatively regulates Tat transactivation activity by altering its subcellular distribution. In terms of processing, asymmetrical arginine methylation by host PRMT6 seems to diminish the transactivation capacity of Tat and affects the interaction with host CCNT1. Post-translationally, acetylation by EP300, CREBBP, GCN5L2/GCN5 and PCAF regulates the transactivation activity of Tat. EP300-mediated acetylation of Lys-50 promotes dissociation of Tat from the TAR RNA through the competitive binding to PCAF's bromodomain. In addition, the non-acetylated Tat's N-terminus can also interact with PCAF. PCAF-mediated acetylation of Lys-28 enhances Tat's binding to CCNT1. Lys-50 is deacetylated by SIRT1. Polyubiquitination by host MDM2 does not target Tat to degradation, but activates its transactivation function and fosters interaction with CCNT1 and TAR RNA. In terms of processing, phosphorylated by EIF2AK2 on serine and threonine residues adjacent to the basic region important for TAR RNA binding and function. Phosphorylation of Tat by EIF2AK2 is dependent on the prior activation of EIF2AK2 by dsRNA.

Its subcellular location is the host nucleus. It localises to the host nucleolus. It is found in the host cytoplasm. The protein localises to the secreted. Its function is as follows. Transcriptional activator that increases RNA Pol II processivity, thereby increasing the level of full-length viral transcripts. Recognizes a hairpin structure at the 5'-LTR of the nascent viral mRNAs referred to as the transactivation responsive RNA element (TAR) and recruits the cyclin T1-CDK9 complex (P-TEFb complex) that will in turn hyperphosphorylate the RNA polymerase II to allow efficient elongation. The CDK9 component of P-TEFb and other Tat-activated kinases hyperphosphorylate the C-terminus of RNA Pol II that becomes stabilized and much more processive. Other factors such as HTATSF1/Tat-SF1, SUPT5H/SPT5, and HTATIP2 are also important for Tat's function. Besides its effect on RNA Pol II processivity, Tat induces chromatin remodeling of proviral genes by recruiting the histone acetyltransferases (HATs) CREBBP, EP300 and PCAF to the chromatin. This also contributes to the increase in proviral transcription rate, especially when the provirus integrates in transcriptionally silent region of the host genome. To ensure maximal activation of the LTR, Tat mediates nuclear translocation of NF-kappa-B by interacting with host RELA. Through its interaction with host TBP, Tat may also modulate transcription initiation. Tat can reactivate a latently infected cell by penetrating in it and transactivating its LTR promoter. In the cytoplasm, Tat is thought to act as a translational activator of HIV-1 mRNAs. Functionally, extracellular circulating Tat can be endocytosed by surrounding uninfected cells via the binding to several surface receptors such as CD26, CXCR4, heparan sulfate proteoglycans (HSPG) or LDLR. Neurons are rarely infected, but they internalize Tat via their LDLR. Through its interaction with nuclear HATs, Tat is potentially able to control the acetylation-dependent cellular gene expression. Modulates the expression of many cellular genes involved in cell survival, proliferation or in coding for cytokines or cytokine receptors. Tat plays a role in T-cell and neurons apoptosis. Tat induced neurotoxicity and apoptosis probably contribute to neuroAIDS. Circulating Tat also acts as a chemokine-like and/or growth factor-like molecule that binds to specific receptors on the surface of the cells, affecting many cellular pathways. In the vascular system, Tat binds to ITGAV/ITGB3 and ITGA5/ITGB1 integrins dimers at the surface of endothelial cells and competes with bFGF for heparin-binding sites, leading to an excess of soluble bFGF. The polypeptide is Protein Tat (Homo sapiens (Human)).